Reading from the N-terminus, the 449-residue chain is L-seryl-tRNA(Sec) selenium transferase (449 aa).

K286 bears the N6-(pyridoxal phosphate)lysine mark.

This sequence belongs to the SelA family. Requires pyridoxal 5'-phosphate as cofactor.

It is found in the cytoplasm. The catalysed reaction is L-seryl-tRNA(Sec) + selenophosphate + H(+) = L-selenocysteinyl-tRNA(Sec) + phosphate. It participates in aminoacyl-tRNA biosynthesis; selenocysteinyl-tRNA(Sec) biosynthesis; selenocysteinyl-tRNA(Sec) from L-seryl-tRNA(Sec) (bacterial route): step 1/1. Converts seryl-tRNA(Sec) to selenocysteinyl-tRNA(Sec) required for selenoprotein biosynthesis. The polypeptide is L-seryl-tRNA(Sec) selenium transferase (Sulfurimonas denitrificans (strain ATCC 33889 / DSM 1251) (Thiomicrospira denitrificans (strain ATCC 33889 / DSM 1251))).